We begin with the raw amino-acid sequence, 444 residues long: Ribosomal protein uS12 methylthiotransferase RimO (444 aa).

One can recognise an MTTase N-terminal domain in the interval 4-118 (IKYGVVSLGC…LSDAIKKSIE (115 aa)). Residues cysteine 13, cysteine 48, cysteine 81, cysteine 155, cysteine 159, and cysteine 162 each coordinate [4Fe-4S] cluster. The region spanning 141 to 373 (TTQKHYAYLR…MQRDIVKSIN (233 aa)) is the Radical SAM core domain. The TRAM domain occupies 374 to 440 (ADKVNKVYKV…EYDLIGVVCD (67 aa)).

This sequence belongs to the methylthiotransferase family. RimO subfamily. [4Fe-4S] cluster is required as a cofactor.

It localises to the cytoplasm. It carries out the reaction L-aspartate(89)-[ribosomal protein uS12]-hydrogen + (sulfur carrier)-SH + AH2 + 2 S-adenosyl-L-methionine = 3-methylsulfanyl-L-aspartate(89)-[ribosomal protein uS12]-hydrogen + (sulfur carrier)-H + 5'-deoxyadenosine + L-methionine + A + S-adenosyl-L-homocysteine + 2 H(+). In terms of biological role, catalyzes the methylthiolation of an aspartic acid residue of ribosomal protein uS12. The polypeptide is Ribosomal protein uS12 methylthiotransferase RimO (Clostridium tetani (strain Massachusetts / E88)).